A 540-amino-acid chain; its full sequence is 2,3-bisphosphoglycerate-independent phosphoglycerate mutase (540 aa).

Asp-13 and Ser-63 together coordinate Mn(2+). Ser-63 (phosphoserine intermediate) is an active-site residue. Residues His-124, 154-155 (RD), Arg-186, Arg-192, 262-265 (RPDR), and Lys-356 each bind substrate. The Mn(2+) site is built by Asp-423, His-427, Asp-464, His-465, and His-483.

This sequence belongs to the BPG-independent phosphoglycerate mutase family. In terms of assembly, monomer. It depends on Mn(2+) as a cofactor.

The enzyme catalyses (2R)-2-phosphoglycerate = (2R)-3-phosphoglycerate. Its pathway is carbohydrate degradation; glycolysis; pyruvate from D-glyceraldehyde 3-phosphate: step 3/5. Functionally, catalyzes the interconversion of 2-phosphoglycerate and 3-phosphoglycerate. The polypeptide is 2,3-bisphosphoglycerate-independent phosphoglycerate mutase (Chloroflexus aggregans (strain MD-66 / DSM 9485)).